A 150-amino-acid chain; its full sequence is D-aminoacyl-tRNA deacylase (150 aa).

A Gly-cisPro motif, important for rejection of L-amino acids motif is present at residues 136 to 137 (GP).

This sequence belongs to the DTD family. Homodimer.

Its subcellular location is the cytoplasm. It catalyses the reaction glycyl-tRNA(Ala) + H2O = tRNA(Ala) + glycine + H(+). The catalysed reaction is a D-aminoacyl-tRNA + H2O = a tRNA + a D-alpha-amino acid + H(+). An aminoacyl-tRNA editing enzyme that deacylates mischarged D-aminoacyl-tRNAs. Also deacylates mischarged glycyl-tRNA(Ala), protecting cells against glycine mischarging by AlaRS. Acts via tRNA-based rather than protein-based catalysis; rejects L-amino acids rather than detecting D-amino acids in the active site. By recycling D-aminoacyl-tRNA to D-amino acids and free tRNA molecules, this enzyme counteracts the toxicity associated with the formation of D-aminoacyl-tRNA entities in vivo and helps enforce protein L-homochirality. In Staphylococcus aureus (strain Mu50 / ATCC 700699), this protein is D-aminoacyl-tRNA deacylase.